The chain runs to 136 residues: Large ribosomal subunit protein eL27 (136 aa).

Positions 5 to 40 constitute a KOW domain; the sequence is MKPGKVVMVLAGRYAGRKAVIVKNIDDGTADRPYSH.

The protein belongs to the eukaryotic ribosomal protein eL27 family. As to quaternary structure, component of the large ribosomal subunit.

The protein localises to the cytoplasm. Its subcellular location is the cytosol. The protein resides in the rough endoplasmic reticulum. In terms of biological role, component of the large ribosomal subunit. This is Large ribosomal subunit protein eL27 (rpl27) from Danio rerio (Zebrafish).